The primary structure comprises 100 residues: Aspartyl/glutamyl-tRNA(Asn/Gln) amidotransferase subunit C (100 aa).

It belongs to the GatC family. In terms of assembly, heterotrimer of A, B and C subunits.

The enzyme catalyses L-glutamyl-tRNA(Gln) + L-glutamine + ATP + H2O = L-glutaminyl-tRNA(Gln) + L-glutamate + ADP + phosphate + H(+). It catalyses the reaction L-aspartyl-tRNA(Asn) + L-glutamine + ATP + H2O = L-asparaginyl-tRNA(Asn) + L-glutamate + ADP + phosphate + 2 H(+). Allows the formation of correctly charged Asn-tRNA(Asn) or Gln-tRNA(Gln) through the transamidation of misacylated Asp-tRNA(Asn) or Glu-tRNA(Gln) in organisms which lack either or both of asparaginyl-tRNA or glutaminyl-tRNA synthetases. The reaction takes place in the presence of glutamine and ATP through an activated phospho-Asp-tRNA(Asn) or phospho-Glu-tRNA(Gln). The sequence is that of Aspartyl/glutamyl-tRNA(Asn/Gln) amidotransferase subunit C from Rickettsia bellii (strain RML369-C).